Consider the following 208-residue polypeptide: Thymidylate kinase (208 aa).

10-17 is a binding site for ATP; it reads GPDGSGKT.

Belongs to the thymidylate kinase family.

The enzyme catalyses dTMP + ATP = dTDP + ADP. Its function is as follows. Phosphorylation of dTMP to form dTDP in both de novo and salvage pathways of dTTP synthesis. This Listeria monocytogenes serotype 4b (strain CLIP80459) protein is Thymidylate kinase.